The primary structure comprises 346 residues: Peripherin-2 (346 aa).

Over 1-24 the chain is Cytoplasmic; sequence MALMKTKFNLKRRVKLAQGLWLMN. A helical membrane pass occupies residues 25–43; it reads WCCVLAGIALFSMGVFLKI. The Lumenal segment spans residues 44–61; it reads ELRKRSEVMDNDESHFVP. Residues 62 to 80 traverse the membrane as a helical segment; that stretch reads NSLILMGSLACALNAFPGK. Residues 81–99 are Cytoplasmic-facing; the sequence is ICYDSLDPTKFPRWKPMLK. Residues 100 to 123 traverse the membrane as a helical segment; the sequence is PYLIICLIFNIFIFFTGVVCFLTR. Topologically, residues 124-264 are lumenal; it reads GSLESTLAHG…LNYYTSMMSS (141 aa). The N-linked (GlcNAc...) asparagine glycan is linked to N229. The helical transmembrane segment at 265–290 threads the bilayer; the sequence is MGGMVFLVWIMEMAVMIGLRFLHTCL. Over 291 to 346 the chain is Cytoplasmic; that stretch reads ETIANPEDPECESEGWILEKSLKDTIKSSWELVKSMGKLNKVETAGGEEAGVATVS.

The protein belongs to the PRPH2/ROM1 family. Homodimer; disulfide-linked. As to expression, found in both rod and cone photoreceptors. Specifically in the rims and incisures of rod and cone outer segment disks.

The protein resides in the membrane. May be involved in the morphogenesis of retina outer segment disks and the development and maintenance of the retina ultrastructure. This Xenopus laevis (African clawed frog) protein is Peripherin-2 (prph2).